The primary structure comprises 177 residues: Chorismate pyruvate-lyase (177 aa).

The substrate site is built by methionine 36, arginine 78, leucine 116, and glutamate 157.

It belongs to the UbiC family. Monomer.

The protein localises to the cytoplasm. It catalyses the reaction chorismate = 4-hydroxybenzoate + pyruvate. It participates in cofactor biosynthesis; ubiquinone biosynthesis. In terms of biological role, removes the pyruvyl group from chorismate, with concomitant aromatization of the ring, to provide 4-hydroxybenzoate (4HB) for the ubiquinone pathway. The protein is Chorismate pyruvate-lyase of Pectobacterium atrosepticum (strain SCRI 1043 / ATCC BAA-672) (Erwinia carotovora subsp. atroseptica).